The primary structure comprises 124 residues: Small ribosomal subunit protein bS6 (124 aa).

A disordered region spans residues 96–124; it reads ETGPSPMMKEVQREEAKKAAAAQPTEAQA. A compositionally biased stretch (low complexity) spans 114–124; it reads AAAAQPTEAQA.

Belongs to the bacterial ribosomal protein bS6 family.

Its function is as follows. Binds together with bS18 to 16S ribosomal RNA. This Burkholderia lata (strain ATCC 17760 / DSM 23089 / LMG 22485 / NCIMB 9086 / R18194 / 383) protein is Small ribosomal subunit protein bS6.